Consider the following 282-residue polypeptide: Bifunctional protein FolD (282 aa).

Residues 165-167 and isoleucine 231 contribute to the NADP(+) site; that span reads GAS.

This sequence belongs to the tetrahydrofolate dehydrogenase/cyclohydrolase family. In terms of assembly, homodimer.

It catalyses the reaction (6R)-5,10-methylene-5,6,7,8-tetrahydrofolate + NADP(+) = (6R)-5,10-methenyltetrahydrofolate + NADPH. The enzyme catalyses (6R)-5,10-methenyltetrahydrofolate + H2O = (6R)-10-formyltetrahydrofolate + H(+). The protein operates within one-carbon metabolism; tetrahydrofolate interconversion. Catalyzes the oxidation of 5,10-methylenetetrahydrofolate to 5,10-methenyltetrahydrofolate and then the hydrolysis of 5,10-methenyltetrahydrofolate to 10-formyltetrahydrofolate. In Francisella philomiragia subsp. philomiragia (strain ATCC 25017 / CCUG 19701 / FSC 153 / O#319-036), this protein is Bifunctional protein FolD.